We begin with the raw amino-acid sequence, 559 residues long: 2-isopropylmalate synthase (559 aa).

The region spanning 30–304 is the Pyruvate carboxyltransferase domain; that stretch reads PLWAAVDLRD…DPGIDFSRMK (275 aa). Mg(2+) contacts are provided by D39, H243, H245, and N279. The tract at residues 436–559 is regulatory domain; it reads VPMGWVLRSY…ETSEQLIANS (124 aa).

This sequence belongs to the alpha-IPM synthase/homocitrate synthase family. LeuA type 2 subfamily. Homodimer. It depends on Mg(2+) as a cofactor.

Its subcellular location is the cytoplasm. The catalysed reaction is 3-methyl-2-oxobutanoate + acetyl-CoA + H2O = (2S)-2-isopropylmalate + CoA + H(+). Its pathway is amino-acid biosynthesis; L-leucine biosynthesis; L-leucine from 3-methyl-2-oxobutanoate: step 1/4. Its function is as follows. Catalyzes the condensation of the acetyl group of acetyl-CoA with 3-methyl-2-oxobutanoate (2-ketoisovalerate) to form 3-carboxy-3-hydroxy-4-methylpentanoate (2-isopropylmalate). The protein is 2-isopropylmalate synthase of Alcanivorax borkumensis (strain ATCC 700651 / DSM 11573 / NCIMB 13689 / SK2).